The chain runs to 514 residues: ATP synthase subunit alpha 2 (514 aa).

Residue 170-177 (GDRQTGKT) coordinates ATP.

Belongs to the ATPase alpha/beta chains family. In terms of assembly, F-type ATPases have 2 components, CF(1) - the catalytic core - and CF(0) - the membrane proton channel. CF(1) has five subunits: alpha(3), beta(3), gamma(1), delta(1), epsilon(1). CF(0) has three main subunits: a(1), b(2) and c(9-12). The alpha and beta chains form an alternating ring which encloses part of the gamma chain. CF(1) is attached to CF(0) by a central stalk formed by the gamma and epsilon chains, while a peripheral stalk is formed by the delta and b chains.

It localises to the cell inner membrane. The catalysed reaction is ATP + H2O + 4 H(+)(in) = ADP + phosphate + 5 H(+)(out). Functionally, produces ATP from ADP in the presence of a proton gradient across the membrane. The alpha chain is a regulatory subunit. The sequence is that of ATP synthase subunit alpha 2 from Hahella chejuensis (strain KCTC 2396).